The sequence spans 996 residues: NACHT, LRR and PYD domains-containing protein 9 (996 aa).

The region spanning 1 to 94 (MAESFFSDFG…WRKARNEIRQ (94 aa)) is the Pyrin domain. Residues 150 to 469 (PTVVLHGPEG…FYMFTRPKDP (320 aa)) enclose the NACHT domain. 156-163 (GPEGIGKT) is a binding site for ATP. LRR repeat units lie at residues 748 to 769 (KLNLLSLCENALKDDGVLVLCE), 777 to 798 (ALEALLLSHCCFSSAACDHLSQ), 805 to 825 (SLTFLDLGSNVLKDEGVTTLC), 834 to 855 (NLQELWLMNCYFTSVCCVDIAT), 862 to 883 (KLKTLKLGNNKIYDAGAKQLCK), and 891 to 914 (KLENLGLEACELSPASCEDLASAL).

This sequence belongs to the NLRP family. In terms of assembly, sensor component of NLRP9 inflammasomes. Inflammasomes are supramolecular complexes that assemble in the cytosol in response to pathogens, such as rotavirus, and play critical roles in innate immunity and inflammation. The core of NLRP9 inflammasomes consists of a signal sensor component (NLRP9), an adapter (ASC/PYCARD), which recruits an effector pro-inflammatory caspase (CASP1). Within the complex, NLRP9 and PYCARD interact via their respective DAPIN/pyrin domains. This interaction initiates speck formation (nucleation) which greatly enhances further addition of soluble PYCARD molecules to the speck in a prion-like polymerization process. Clustered PYCARD nucleates the formation of CASP1 filaments through the interaction of their respective CARD domains, acting as a platform for CASP1 polymerization. CASP1 filament formation increases local enzyme concentration, resulting in trans-autocleavage and activation. Active CASP1 then processes IL1B and IL18 precursors, leading to the release of mature cytokines in the extracellular milieu and inflammatory response. Interacts with DHX9 upon rotavirus infection; this interaction may trigger inflammasome activation and inflammatory response. As to expression, detected exclusively in testis and ovary, and at high level in the oocyte from antral follicles.

The protein resides in the cytoplasm. It is found in the inflammasome. In terms of biological role, as the sensor component of the NLRP9 inflammasome, plays a crucial role in innate immunity and inflammation. In response to pathogens, including rotavirus, initiates the formation of the inflammasome polymeric complex, made of NLRP9, PYCARD and CASP1. Recruitment of proCASP1 to the inflammasome promotes its activation and CASP1-catalyzed IL1B and IL18 maturation and release in the extracellular milieu. The active cytokines stimulate inflammatory responses. Inflammasomes can also induce pyroptosis, an inflammatory form of programmed cell death. NLRP9 inflammasome activation may be initiated by DHX9 interaction with viral double-stranded RNA (dsRNA), preferentially to short dsRNA segments. The sequence is that of NACHT, LRR and PYD domains-containing protein 9 (NLRP9) from Bos taurus (Bovine).